The sequence spans 900 residues: DNA polymerase nu (900 aa).

Positions 60-75 are enriched in basic and acidic residues; that stretch reads LEDRKTQSPEKKDLKS. Disordered regions lie at residues 60–90 and 863–900; these read LEDR…LSPQ and GPPP…SFCL. A compositionally biased stretch (polar residues) spans 76–90; it reads LRSQTSRGSAKLSPQ.

This sequence belongs to the DNA polymerase type-A family. As to quaternary structure, interacts with FANCD2, FANCI, PCNA, RAD51 and HELQ. As to expression, highly expressed in testis and heart. Weakly expressed in skeletal muscle.

The protein localises to the nucleus. The enzyme catalyses DNA(n) + a 2'-deoxyribonucleoside 5'-triphosphate = DNA(n+1) + diphosphate. Its activity is regulated as follows. Inhibited by ddTTP. Its function is as follows. DNA polymerase with very low fidelity that catalyzes considerable misincorporation by inserting dTTP opposite a G template, and dGTP opposite a T template. Is the least accurate of the DNA polymerase A family (i.e. POLG, POLN and POLQ). Can perform accurate translesion DNA synthesis (TLS) past a 5S-thymine glycol. Can perform efficient strand displacement past a nick or a gap and gives rise to an amount of product similar to that on non-damaged template. Has no exonuclease activity. Error-prone DNA polymerase that preferentially misincorporates dT regardless of template sequence. May play a role in TLS during interstrand cross-link (ICL) repair. May be involved in TLS when genomic replication is blocked by extremely large major groove DNA lesions. May function in the bypass of some DNA-protein and DNA-DNA cross-links. May have a role in cellular tolerance to DNA cross-linking agents. Involved in the repair of DNA cross-links and double-strand break (DSB) resistance. Participates in FANCD2-mediated repair. Forms a complex with HELQ helicase that participates in homologous recombination (HR) repair and is essential for cellular protection against DNA cross-links. The chain is DNA polymerase nu (POLN) from Homo sapiens (Human).